We begin with the raw amino-acid sequence, 126 residues long: Type II methyltransferase M.HgiGI (126 aa).

One can recognise an SAM-dependent MTase C5-type domain in the interval 1-126; the sequence is MKTIDLFAGC…ARLSKIHQQA (126 aa). Residue cysteine 75 is part of the active site.

This sequence belongs to the class I-like SAM-binding methyltransferase superfamily. C5-methyltransferase family.

It catalyses the reaction a 2'-deoxycytidine in DNA + S-adenosyl-L-methionine = a 5-methyl-2'-deoxycytidine in DNA + S-adenosyl-L-homocysteine + H(+). Its function is as follows. A methylase, recognizes the double-stranded sequence 5'-GRCGYC-3', methylates C-? on both strands, and protects the DNA from cleavage by the HgiEI endonuclease. The sequence is that of Type II methyltransferase M.HgiGI from Herpetosiphon aurantiacus (Herpetosiphon giganteus).